Here is a 279-residue protein sequence, read N- to C-terminus: Secreted RxLR effector protein 90 (279 aa).

A signal peptide spans 1–19; that stretch reads MKSAAAFATFLTLSVFVAT. The RxLR-dEER signature appears at 29-46; it reads RGLRSLADNQSTESSEGR. Disordered stretches follow at residues 29-53 and 135-176; these read RGLR…YNHH and ATPA…NLAG. Residue Asn37 is glycosylated (N-linked (GlcNAc...) asparagine). The segment covering 135–146 has biased composition (low complexity); sequence ATPAPTTSVPSS. A compositionally biased stretch (polar residues) spans 147-163; that stretch reads LVNTDTSDNQLPTTPVA. Gly residues predominate over residues 166–176; it reads QGGGIGSNLAG. A glycan (N-linked (GlcNAc...) asparagine) is linked at Asn217.

Belongs to the RxLR effector family.

The protein localises to the secreted. The protein resides in the host cell membrane. Functionally, secreted effector that completely suppresses the host cell death induced by cell death-inducing proteins. This chain is Secreted RxLR effector protein 90, found in Plasmopara viticola (Downy mildew of grapevine).